Consider the following 236-residue polypeptide: uncharacterized protein (236 aa).

The protein localises to the virion. This is an uncharacterized protein from Acanthamoeba polyphaga (Amoeba).